The chain runs to 162 residues: Large ribosomal subunit protein uL10 (162 aa).

This sequence belongs to the universal ribosomal protein uL10 family. In terms of assembly, part of the ribosomal stalk of the 50S ribosomal subunit. The N-terminus interacts with L11 and the large rRNA to form the base of the stalk. The C-terminus forms an elongated spine to which L12 dimers bind in a sequential fashion forming a multimeric L10(L12)X complex.

Functionally, forms part of the ribosomal stalk, playing a central role in the interaction of the ribosome with GTP-bound translation factors. The chain is Large ribosomal subunit protein uL10 (rplJ) from Mycoplasma genitalium (strain ATCC 33530 / DSM 19775 / NCTC 10195 / G37) (Mycoplasmoides genitalium).